The following is a 346-amino-acid chain: Holliday junction branch migration complex subunit RuvB (346 aa).

The interval 1–181 is large ATPase domain (RuvB-L); the sequence is MSDRNPLIDA…FGIPVRLNFY (181 aa). ATP is bound by residues L20, R21, G62, K65, T66, T67, 128–130, R171, Y181, and R218; that span reads EDF. Position 66 (T66) interacts with Mg(2+). The small ATPAse domain (RuvB-S) stretch occupies residues 182–252; it reads TVEELEYIVR…IADEALSRLE (71 aa). Positions 255 to 346 are head domain (RuvB-H); it reads NRGLDQLDRR…SQYGLFMEDE (92 aa). DNA is bound by residues R291, R310, and R315.

It belongs to the RuvB family. In terms of assembly, homohexamer. Forms an RuvA(8)-RuvB(12)-Holliday junction (HJ) complex. HJ DNA is sandwiched between 2 RuvA tetramers; dsDNA enters through RuvA and exits via RuvB. An RuvB hexamer assembles on each DNA strand where it exits the tetramer. Each RuvB hexamer is contacted by two RuvA subunits (via domain III) on 2 adjacent RuvB subunits; this complex drives branch migration. In the full resolvosome a probable DNA-RuvA(4)-RuvB(12)-RuvC(2) complex forms which resolves the HJ.

It localises to the cytoplasm. The enzyme catalyses ATP + H2O = ADP + phosphate + H(+). The RuvA-RuvB-RuvC complex processes Holliday junction (HJ) DNA during genetic recombination and DNA repair, while the RuvA-RuvB complex plays an important role in the rescue of blocked DNA replication forks via replication fork reversal (RFR). RuvA specifically binds to HJ cruciform DNA, conferring on it an open structure. The RuvB hexamer acts as an ATP-dependent pump, pulling dsDNA into and through the RuvAB complex. RuvB forms 2 homohexamers on either side of HJ DNA bound by 1 or 2 RuvA tetramers; 4 subunits per hexamer contact DNA at a time. Coordinated motions by a converter formed by DNA-disengaged RuvB subunits stimulates ATP hydrolysis and nucleotide exchange. Immobilization of the converter enables RuvB to convert the ATP-contained energy into a lever motion, pulling 2 nucleotides of DNA out of the RuvA tetramer per ATP hydrolyzed, thus driving DNA branch migration. The RuvB motors rotate together with the DNA substrate, which together with the progressing nucleotide cycle form the mechanistic basis for DNA recombination by continuous HJ branch migration. Branch migration allows RuvC to scan DNA until it finds its consensus sequence, where it cleaves and resolves cruciform DNA. The polypeptide is Holliday junction branch migration complex subunit RuvB (Brucella suis (strain ATCC 23445 / NCTC 10510)).